The primary structure comprises 336 residues: Ribosomal RNA large subunit methyltransferase F (336 aa).

It belongs to the methyltransferase superfamily. METTL16/RlmF family.

It localises to the cytoplasm. It catalyses the reaction adenosine(1618) in 23S rRNA + S-adenosyl-L-methionine = N(6)-methyladenosine(1618) in 23S rRNA + S-adenosyl-L-homocysteine + H(+). Its function is as follows. Specifically methylates the adenine in position 1618 of 23S rRNA. The chain is Ribosomal RNA large subunit methyltransferase F from Yersinia pseudotuberculosis serotype I (strain IP32953).